Reading from the N-terminus, the 96-residue chain is uncharacterized protein (96 aa).

One can recognise an HTH cro/C1-type domain in the interval 38-91 (IEQLRKGTGLKIDDFARVLGVSVAMVKEWESRRVKPSSAELKLMRLIQANPALS). A DNA-binding region (H-T-H motif) is located at residues 49-68 (IDDFARVLGVSVAMVKEWES).

This is an uncharacterized protein from Escherichia coli O157:H7.